The following is a 351-amino-acid chain: UDP-3-O-acylglucosamine N-acyltransferase (351 aa).

The active-site Proton acceptor is histidine 240.

This sequence belongs to the transferase hexapeptide repeat family. LpxD subfamily. Homotrimer.

The catalysed reaction is a UDP-3-O-[(3R)-3-hydroxyacyl]-alpha-D-glucosamine + a (3R)-hydroxyacyl-[ACP] = a UDP-2-N,3-O-bis[(3R)-3-hydroxyacyl]-alpha-D-glucosamine + holo-[ACP] + H(+). It functions in the pathway bacterial outer membrane biogenesis; LPS lipid A biosynthesis. Its function is as follows. Catalyzes the N-acylation of UDP-3-O-acylglucosamine using 3-hydroxyacyl-ACP as the acyl donor. Is involved in the biosynthesis of lipid A, a phosphorylated glycolipid that anchors the lipopolysaccharide to the outer membrane of the cell. The protein is UDP-3-O-acylglucosamine N-acyltransferase of Pseudomonas syringae pv. syringae (strain B728a).